The chain runs to 239 residues: 4-hydroxy-tetrahydrodipicolinate reductase (239 aa).

NAD(+) contacts are provided by residues 12 to 17 (GASGRM), 94 to 96 (GTT), and 118 to 121 (ASNF). His150 (proton donor/acceptor) is an active-site residue. Position 151 (His151) interacts with (S)-2,3,4,5-tetrahydrodipicolinate. Lys154 (proton donor) is an active-site residue. 160–161 (GT) provides a ligand contact to (S)-2,3,4,5-tetrahydrodipicolinate.

Belongs to the DapB family.

It localises to the cytoplasm. The enzyme catalyses (S)-2,3,4,5-tetrahydrodipicolinate + NAD(+) + H2O = (2S,4S)-4-hydroxy-2,3,4,5-tetrahydrodipicolinate + NADH + H(+). It catalyses the reaction (S)-2,3,4,5-tetrahydrodipicolinate + NADP(+) + H2O = (2S,4S)-4-hydroxy-2,3,4,5-tetrahydrodipicolinate + NADPH + H(+). It functions in the pathway amino-acid biosynthesis; L-lysine biosynthesis via DAP pathway; (S)-tetrahydrodipicolinate from L-aspartate: step 4/4. Catalyzes the conversion of 4-hydroxy-tetrahydrodipicolinate (HTPA) to tetrahydrodipicolinate. This is 4-hydroxy-tetrahydrodipicolinate reductase from Stenotrophomonas maltophilia (strain K279a).